A 291-amino-acid polypeptide reads, in one-letter code: 3-hydroxy-5-phosphonooxypentane-2,4-dione thiolase (291 aa).

Residue lysine 203 is the Schiff-base intermediate with substrate of the active site.

The protein belongs to the DeoC/FbaB aldolase family. In terms of assembly, homodecamer.

It localises to the cytoplasm. The enzyme catalyses dihydroxyacetone phosphate + acetyl-CoA = 3-hydroxy-2,4-dioxopentyl phosphate + CoA. Its function is as follows. Involved in the degradation of phospho-AI-2, thereby terminating induction of the lsr operon and closing the AI-2 signaling cycle. Catalyzes the transfer of an acetyl moiety from 3-hydroxy-5-phosphonooxypentane-2,4-dione to CoA to form glycerone phosphate and acetyl-CoA. In Yersinia pestis bv. Antiqua (strain Antiqua), this protein is 3-hydroxy-5-phosphonooxypentane-2,4-dione thiolase.